The primary structure comprises 371 residues: Peptide chain release factor 2 (371 aa).

The residue at position 253 (glutamine 253) is an N5-methylglutamine.

The protein belongs to the prokaryotic/mitochondrial release factor family. Post-translationally, methylated by PrmC. Methylation increases the termination efficiency of RF2.

The protein localises to the cytoplasm. Its function is as follows. Peptide chain release factor 2 directs the termination of translation in response to the peptide chain termination codons UGA and UAA. The polypeptide is Peptide chain release factor 2 (Mycobacterium ulcerans (strain Agy99)).